Consider the following 228-residue polypeptide: Carbonic anhydrase (228 aa).

Zn(2+)-binding residues include cysteine 56, aspartate 58, histidine 112, and cysteine 115.

Belongs to the beta-class carbonic anhydrase family. Requires Zn(2+) as cofactor.

The catalysed reaction is hydrogencarbonate + H(+) = CO2 + H2O. In terms of biological role, catalyzes the reversible hydration of CO(2) to H(2)CO(3). The main role may be to provide inorganic carbon for the bicarbonate-dependent carboxylation reactions catalyzed by pyruvate carboxylase, acetyl-CoA carboxylase and carbamoyl-phosphate synthetase. Involved in osmoadaptation. This Emericella nidulans (strain FGSC A4 / ATCC 38163 / CBS 112.46 / NRRL 194 / M139) (Aspergillus nidulans) protein is Carbonic anhydrase.